Consider the following 90-residue polypeptide: Barrier-to-autointegration factor-like protein (90 aa).

This sequence belongs to the BAF family. Homodimer. Heterodimerizes with BANF1. Expressed strongly in testis and pancreas. Also detected in brain, colon, liver, lung, ovary, placenta, prostate, small intestine, spleen and thymus. Not detected in heart, kidney and skeletal muscle.

It localises to the nucleus. The protein resides in the cytoplasm. May play a role in BANF1 regulation and influence tissue-specific roles of BANF1. The sequence is that of Barrier-to-autointegration factor-like protein (BANF2) from Homo sapiens (Human).